Here is a 1077-residue protein sequence, read N- to C-terminus: Insulin receptor substrate 2-B (1077 aa).

The interval 1-66 (MAGVLCPTEE…APASTAEDDV (66 aa)) is disordered. 2 consecutive short sequence motifs (YXXM motif) follow at residues 33-36 (YRRM) and 147-150 (YFAM). The region spanning 65–170 (DVRKRGYLRK…WYQALSELIN (106 aa)) is the PH domain. The IRS-type PTB domain occupies 195–299 (FKEVWQVNVK…DTMKALKAYS (105 aa)). 3 disordered regions span residues 342–373 (ETVVGTPPSAKNNSFRFRTSSEGEGTMTRPFR), 428–464 (VCSSNGHGSASETLTRPSSSSVCGSPSDGGFISSDEY), and 476–495 (VRSNTPDSLGNTPPIQEENT). 2 stretches are compositionally biased toward polar residues: residues 350–364 (SAKNNSFRFRTSSEG) and 428–444 (VCSSNGHGSASETLTRP). Over residues 445–457 (SSSSVCGSPSDGG) the composition is skewed to low complexity. Polar residues predominate over residues 477-495 (RSNTPDSLGNTPPIQEENT). The short motif at 499-502 (YMSM) is the YXXM motif 3 element. Residues 530–544 (KPTNAASQQKSQTAV) are compositionally biased toward polar residues. Positions 530 to 571 (KPTNAASQQKSQTAVSLDEDSEETNKQFAYAESPKLKDSSHV) are disordered. 6 consecutive short sequence motifs (YXXM motif) follow at residues 595 to 598 (YMPM), 608 to 611 (YLPM), 634 to 637 (YMMM), 666 to 669 (YMDM), 713 to 716 (YVPM), and 891 to 894 (YTTM).

Post-translationally, phosphorylated by INSR.

Potentiates insulin signaling. The sequence is that of Insulin receptor substrate 2-B (irs2-b) from Xenopus laevis (African clawed frog).